The chain runs to 354 residues: GTPase Obg (354 aa).

In terms of domain architecture, Obg spans 1–159 (MKYIDEAIIH…ADLKLELKVL (159 aa)). An OBG-type G domain is found at 160-334 (ADVGLLGMPN…LTYAIMEFLE (175 aa)). Residues 166–173 (GMPNAGKS), 191–195 (FTTMH), 213–216 (DIPG), 284–287 (NKVD), and 315–317 (SAM) each bind GTP. S173 and T193 together coordinate Mg(2+).

Belongs to the TRAFAC class OBG-HflX-like GTPase superfamily. OBG GTPase family. As to quaternary structure, monomer. Mg(2+) is required as a cofactor.

It is found in the cytoplasm. An essential GTPase which binds GTP, GDP and possibly (p)ppGpp with moderate affinity, with high nucleotide exchange rates and a fairly low GTP hydrolysis rate. Plays a role in control of the cell cycle, stress response, ribosome biogenesis and in those bacteria that undergo differentiation, in morphogenesis control. In Nitrosospira multiformis (strain ATCC 25196 / NCIMB 11849 / C 71), this protein is GTPase Obg.